We begin with the raw amino-acid sequence, 331 residues long: Probable transaldolase (331 aa).

Lysine 142 acts as the Schiff-base intermediate with substrate in catalysis.

It belongs to the transaldolase family. Type 1 subfamily. As to quaternary structure, homodimer.

It is found in the cytoplasm. It catalyses the reaction D-sedoheptulose 7-phosphate + D-glyceraldehyde 3-phosphate = D-erythrose 4-phosphate + beta-D-fructose 6-phosphate. It functions in the pathway carbohydrate degradation; pentose phosphate pathway; D-glyceraldehyde 3-phosphate and beta-D-fructose 6-phosphate from D-ribose 5-phosphate and D-xylulose 5-phosphate (non-oxidative stage): step 2/3. Transaldolase is important for the balance of metabolites in the pentose-phosphate pathway. This Drosophila melanogaster (Fruit fly) protein is Probable transaldolase.